Here is a 643-residue protein sequence, read N- to C-terminus: Threonine--tRNA ligase (643 aa).

A TGS domain is found at 1–61 (MPIITLPDGS…TEDSTLEIIT (61 aa)). Positions 243 to 534 (DHRKIGKALD…ITEEYAGFFP (292 aa)) are catalytic. The Zn(2+) site is built by Cys-334, His-385, and His-511.

The protein belongs to the class-II aminoacyl-tRNA synthetase family. As to quaternary structure, homodimer. Zn(2+) serves as cofactor.

It localises to the cytoplasm. The enzyme catalyses tRNA(Thr) + L-threonine + ATP = L-threonyl-tRNA(Thr) + AMP + diphosphate + H(+). Functionally, catalyzes the attachment of threonine to tRNA(Thr) in a two-step reaction: L-threonine is first activated by ATP to form Thr-AMP and then transferred to the acceptor end of tRNA(Thr). Also edits incorrectly charged L-seryl-tRNA(Thr). The protein is Threonine--tRNA ligase of Mannheimia succiniciproducens (strain KCTC 0769BP / MBEL55E).